The primary structure comprises 288 residues: uncharacterized protein (288 aa).

The span at 126–136 (VAAPASTPVAP) shows a compositional bias: low complexity. 2 disordered regions span residues 126-227 (VAAP…VTSV) and 258-288 (KEKDQTAEESQEQPSLSLEETLVHDRISSEE). Over residues 143 to 152 (RKEFKNEKWK) the composition is skewed to basic and acidic residues. Over residues 153–162 (DKKKQGRRRN) the composition is skewed to basic residues. Over residues 180-194 (VAEECLQESSSEEGD) the composition is skewed to acidic residues. Basic and acidic residues predominate over residues 278 to 288 (TLVHDRISSEE).

It belongs to the chlamydial CPn_0623/CT_504/TC_0791 family.

This is an uncharacterized protein from Chlamydia trachomatis serovar D (strain ATCC VR-885 / DSM 19411 / UW-3/Cx).